The chain runs to 188 residues: Elongation factor P (188 aa).

The disordered stretch occupies residues 139-163 (PVTKGQTASSSYKPATLSNGVRTQV). The segment covering 142-160 (KGQTASSSYKPATLSNGVR) has biased composition (polar residues).

Belongs to the elongation factor P family.

The protein localises to the cytoplasm. The protein operates within protein biosynthesis; polypeptide chain elongation. Involved in peptide bond synthesis. Stimulates efficient translation and peptide-bond synthesis on native or reconstituted 70S ribosomes in vitro. Probably functions indirectly by altering the affinity of the ribosome for aminoacyl-tRNA, thus increasing their reactivity as acceptors for peptidyl transferase. The protein is Elongation factor P of Methylobacterium nodulans (strain LMG 21967 / CNCM I-2342 / ORS 2060).